Consider the following 603-residue polypeptide: Keratin, type II cuticular Hb4 (603 aa).

The head stretch occupies residues 1 to 173 (MSCRSYRVSS…PNAQRVKRDE (173 aa)). The IF rod domain maps to 173-484 (EKEQIKTLNN…RLLEGEEIRI (312 aa)). The interval 174 to 208 (KEQIKTLNNKFASFIDKVRFLEQQNKLLETKWSFL) is coil 1A. Positions 209–218 (QEQKCARSNL) are linker 1. The interval 219–319 (EPLFDNYITN…YHEEIEMLQS (101 aa)) is coil 1B. The segment at 320-336 (HISETSVIVKMDNSRDL) is linker 12. Residues 337–480 (NLDGIIAEVK…VTYRRLLEGE (144 aa)) are coil 2. The segment at 481–603 (EIRICEGVGP…STTTSRRTRY (123 aa)) is tail. The segment at 579 to 603 (CSGGRGNRSSSVRFSSTTTSRRTRY) is disordered.

This sequence belongs to the intermediate filament family. Heterotetramer of two type I and two type II keratins. In skin, only expressed in the suprabasal cells of tail scale epidermis. Suprabasally expressed in stratified squamous epithelia and also in the posterior unit of the complex filiform papillae of tongue. Expressed in rare anatomical sites in which an orthokeratinized stratum corneum would be too soft and a hard keratinized structure would be too rigid to meet the functional requirement of the respective epithelia.

This is Keratin, type II cuticular Hb4 (Krt84) from Mus musculus (Mouse).